The sequence spans 271 residues: Bifunctional protein FolD (271 aa).

NADP(+)-binding positions include 154 to 156, S181, and I222; that span reads GRS.

It belongs to the tetrahydrofolate dehydrogenase/cyclohydrolase family. As to quaternary structure, homodimer.

It carries out the reaction (6R)-5,10-methylene-5,6,7,8-tetrahydrofolate + NADP(+) = (6R)-5,10-methenyltetrahydrofolate + NADPH. The catalysed reaction is (6R)-5,10-methenyltetrahydrofolate + H2O = (6R)-10-formyltetrahydrofolate + H(+). It participates in one-carbon metabolism; tetrahydrofolate interconversion. Its function is as follows. Catalyzes the oxidation of 5,10-methylenetetrahydrofolate to 5,10-methenyltetrahydrofolate and then the hydrolysis of 5,10-methenyltetrahydrofolate to 10-formyltetrahydrofolate. This Thermotoga petrophila (strain ATCC BAA-488 / DSM 13995 / JCM 10881 / RKU-1) protein is Bifunctional protein FolD.